Reading from the N-terminus, the 488-residue chain is Inosine-5'-monophosphate dehydrogenase (488 aa).

2 consecutive CBS domains span residues 95–153 and 157–216; these read VISN…SIKI and MTKE…AKDE. Residues D250 and 300-302 contribute to the NAD(+) site; that span reads GIG. G302 and G304 together coordinate K(+). An IMP-binding site is contributed by S305. Residue C307 participates in K(+) binding. C307 acts as the Thioimidate intermediate in catalysis. IMP is bound by residues 340–342, 363–364, and 387–391; these read DGG, GS, and YRGMG. Catalysis depends on R403, which acts as the Proton acceptor. E417 contacts IMP. Positions 467 to 488 are disordered; it reads AGLAESHPHDVQITKESPNYSF. Residues E471, S472, and H473 each contribute to the K(+) site.

The protein belongs to the IMPDH/GMPR family. Homotetramer. K(+) is required as a cofactor.

It catalyses the reaction IMP + NAD(+) + H2O = XMP + NADH + H(+). The protein operates within purine metabolism; XMP biosynthesis via de novo pathway; XMP from IMP: step 1/1. With respect to regulation, mycophenolic acid (MPA) is a non-competitive inhibitor that prevents formation of the closed enzyme conformation by binding to the same site as the amobile flap. In contrast, mizoribine monophosphate (MZP) is a competitive inhibitor that induces the closed conformation. MPA is a potent inhibitor of mammalian IMPDHs but a poor inhibitor of the bacterial enzymes. MZP is a more potent inhibitor of bacterial IMPDH. In terms of biological role, catalyzes the conversion of inosine 5'-phosphate (IMP) to xanthosine 5'-phosphate (XMP), the first committed and rate-limiting step in the de novo synthesis of guanine nucleotides, and therefore plays an important role in the regulation of cell growth. This is Inosine-5'-monophosphate dehydrogenase from Staphylococcus saprophyticus subsp. saprophyticus (strain ATCC 15305 / DSM 20229 / NCIMB 8711 / NCTC 7292 / S-41).